The following is a 230-amino-acid chain: Leucyl/phenylalanyl-tRNA--protein transferase (230 aa).

The protein belongs to the L/F-transferase family.

The protein resides in the cytoplasm. The enzyme catalyses N-terminal L-lysyl-[protein] + L-leucyl-tRNA(Leu) = N-terminal L-leucyl-L-lysyl-[protein] + tRNA(Leu) + H(+). It carries out the reaction N-terminal L-arginyl-[protein] + L-leucyl-tRNA(Leu) = N-terminal L-leucyl-L-arginyl-[protein] + tRNA(Leu) + H(+). The catalysed reaction is L-phenylalanyl-tRNA(Phe) + an N-terminal L-alpha-aminoacyl-[protein] = an N-terminal L-phenylalanyl-L-alpha-aminoacyl-[protein] + tRNA(Phe). Its function is as follows. Functions in the N-end rule pathway of protein degradation where it conjugates Leu, Phe and, less efficiently, Met from aminoacyl-tRNAs to the N-termini of proteins containing an N-terminal arginine or lysine. The chain is Leucyl/phenylalanyl-tRNA--protein transferase from Rhodopseudomonas palustris (strain BisB18).